The sequence spans 126 residues: Small ribosomal subunit protein uS13c (126 aa).

The disordered stretch occupies residues 97 to 126 (PLRGQRTRTNARTRRGGKKTVAGKKKAPRK). A compositionally biased stretch (basic residues) spans 101 to 126 (QRTRTNARTRRGGKKTVAGKKKAPRK).

Belongs to the universal ribosomal protein uS13 family. Part of the 30S ribosomal subunit.

It localises to the plastid. The protein resides in the chloroplast. Located at the top of the head of the 30S subunit, it contacts several helices of the 16S rRNA. The protein is Small ribosomal subunit protein uS13c of Porphyra purpurea (Red seaweed).